The following is a 306-amino-acid chain: Ribosomal protein L11 methyltransferase (306 aa).

Thr139, Gly173, Asp195, and Asn242 together coordinate S-adenosyl-L-methionine.

It belongs to the methyltransferase superfamily. PrmA family.

Its subcellular location is the cytoplasm. The catalysed reaction is L-lysyl-[protein] + 3 S-adenosyl-L-methionine = N(6),N(6),N(6)-trimethyl-L-lysyl-[protein] + 3 S-adenosyl-L-homocysteine + 3 H(+). In terms of biological role, methylates ribosomal protein L11. The sequence is that of Ribosomal protein L11 methyltransferase from Nostoc sp. (strain PCC 7120 / SAG 25.82 / UTEX 2576).